The primary structure comprises 318 residues: Acetyl-coenzyme A carboxylase carboxyl transferase subunit alpha (318 aa).

One can recognise a CoA carboxyltransferase C-terminal domain in the interval 38–292; sequence ALDRKAEEML…GEAIAAMLGE (255 aa).

This sequence belongs to the AccA family. In terms of assembly, acetyl-CoA carboxylase is a heterohexamer composed of biotin carboxyl carrier protein (AccB), biotin carboxylase (AccC) and two subunits each of ACCase subunit alpha (AccA) and ACCase subunit beta (AccD).

The protein localises to the cytoplasm. It carries out the reaction N(6)-carboxybiotinyl-L-lysyl-[protein] + acetyl-CoA = N(6)-biotinyl-L-lysyl-[protein] + malonyl-CoA. The protein operates within lipid metabolism; malonyl-CoA biosynthesis; malonyl-CoA from acetyl-CoA: step 1/1. Its function is as follows. Component of the acetyl coenzyme A carboxylase (ACC) complex. First, biotin carboxylase catalyzes the carboxylation of biotin on its carrier protein (BCCP) and then the CO(2) group is transferred by the carboxyltransferase to acetyl-CoA to form malonyl-CoA. This is Acetyl-coenzyme A carboxylase carboxyl transferase subunit alpha from Paracoccus denitrificans (strain Pd 1222).